A 332-amino-acid chain; its full sequence is N-acetyl-gamma-glutamyl-phosphate reductase (332 aa).

Residue Cys144 is part of the active site.

It belongs to the NAGSA dehydrogenase family. Type 1 subfamily.

It is found in the cytoplasm. It carries out the reaction N-acetyl-L-glutamate 5-semialdehyde + phosphate + NADP(+) = N-acetyl-L-glutamyl 5-phosphate + NADPH + H(+). It participates in amino-acid biosynthesis; L-arginine biosynthesis; N(2)-acetyl-L-ornithine from L-glutamate: step 3/4. Functionally, catalyzes the NADPH-dependent reduction of N-acetyl-5-glutamyl phosphate to yield N-acetyl-L-glutamate 5-semialdehyde. The chain is N-acetyl-gamma-glutamyl-phosphate reductase from Archaeoglobus fulgidus (strain ATCC 49558 / DSM 4304 / JCM 9628 / NBRC 100126 / VC-16).